The chain runs to 255 residues: Membrane protein insertase YidC 2 (255 aa).

Residues 1–20 (MKKKLGLLAMVVALMAITAG) form the signal peptide. Cys-21 is lipidated: N-palmitoyl cysteine. Cys-21 is lipidated: S-diacylglycerol cysteine. The next 5 membrane-spanning stretches (helical) occupy residues 59 to 79 (YGLA…PLMI), 129 to 149 (LAGC…YHAI), 160 to 180 (FLWF…VAAI), 202 to 222 (MMLW…PAAL), and 223 to 243 (SLYW…IKGP).

It belongs to the OXA1/ALB3/YidC family. Type 2 subfamily.

The protein resides in the cell membrane. In terms of biological role, required for the insertion and/or proper folding and/or complex formation of integral membrane proteins into the membrane. Involved in integration of membrane proteins that insert both dependently and independently of the Sec translocase complex, as well as at least some lipoproteins. The protein is Membrane protein insertase YidC 2 of Bacillus anthracis.